Here is a 257-residue protein sequence, read N- to C-terminus: MDRIIEKLDHGWWVVSHEQKLWLPKGELPYGEAANFDLVGQRALQIGEWQGEPVWLVQLQRRHDMGSVRQVIDLDVGLFQLAGRGVQLAEFYRSHKYCGYCGHEMYPSKTEWAMLCSHCRERYYPQIAPCIIVAIRRDDSILLAQHTRHRNGVHTVLAGFVEVGETLEQAVAREVMEESGIKVKNLRYVTSQPWPFPQSLMTAFMAEYDSGEIVIDPKELLEANWYRYDDLPLLPPPGTVARRLIEDTVAMCRAEYE.

Residues lysine 25 and arginine 69 each contribute to the substrate site. The Zn(2+) site is built by cysteine 98 and cysteine 101. Glutamate 111 is a binding site for substrate. 2 residues coordinate Zn(2+): cysteine 116 and cysteine 119. Tyrosine 124 provides a ligand contact to substrate. The Nudix hydrolase domain occupies 125–248 (PQIAPCIIVA…TVARRLIEDT (124 aa)). A divalent metal cation is bound by residues alanine 158, glutamate 174, and glutamate 178. The short motif at 159-180 (GFVEVGETLEQAVAREVMEESG) is the Nudix box element. 192-199 (QPWPFPQS) contributes to the substrate binding site. Glutamate 219 lines the a divalent metal cation pocket. Alanine 241 provides a ligand contact to substrate.

Belongs to the Nudix hydrolase family. NudC subfamily. In terms of assembly, homodimer. Requires Mg(2+) as cofactor. Mn(2+) serves as cofactor. The cofactor is Zn(2+).

The catalysed reaction is a 5'-end NAD(+)-phospho-ribonucleoside in mRNA + H2O = a 5'-end phospho-adenosine-phospho-ribonucleoside in mRNA + beta-nicotinamide D-ribonucleotide + 2 H(+). The enzyme catalyses NAD(+) + H2O = beta-nicotinamide D-ribonucleotide + AMP + 2 H(+). It carries out the reaction NADH + H2O = reduced beta-nicotinamide D-ribonucleotide + AMP + 2 H(+). MRNA decapping enzyme that specifically removes the nicotinamide adenine dinucleotide (NAD) cap from a subset of mRNAs by hydrolyzing the diphosphate linkage to produce nicotinamide mononucleotide (NMN) and 5' monophosphate mRNA. The NAD-cap is present at the 5'-end of some mRNAs and stabilizes RNA against 5'-processing. Has preference for mRNAs with a 5'-end purine. Catalyzes the hydrolysis of a broad range of dinucleotide pyrophosphates. In Escherichia coli O127:H6 (strain E2348/69 / EPEC), this protein is NAD-capped RNA hydrolase NudC.